The primary structure comprises 1034 residues: FERM domain-containing protein 4B (1034 aa).

The FERM domain occupies 59–361; it reads RHCQVHLLDD…SQHQFYLDRK (303 aa). S372 carries the phosphoserine modification. Coiled-coil stretches lie at residues 417 to 450 and 531 to 561; these read EVSE…ELKK and KKKR…RCGK. The tract at residues 542–971 is necessary for adherens junction and tight junction localization; that stretch reads MKKLQEIENA…TQLTIGLSDY (430 aa). Residues 576–589 show a composition bias toward low complexity; that stretch reads PSESSSLSDTTTYD. Disordered regions lie at residues 576-614, 635-698, 712-735, and 752-786; these read PSES…ILPP, DTRQ…LESQ, FSLS…YTSQ, and TTQT…AQKD. The residue at position 608 (S608) is a Phosphoserine. Composition is skewed to polar residues over residues 635-650 and 663-674; these read DTRQ…SSPY and MPTTPVLTRNAY. A compositionally biased stretch (low complexity) spans 675 to 685; sequence SSSHLEPESSS. Phosphoserine is present on S697. The span at 713–722 shows a compositional bias: low complexity; it reads SLSKSQRSSS. A compositionally biased stretch (polar residues) spans 769 to 781; that stretch reads QNVSTSNSGSMPN. A Glycyl lysine isopeptide (Lys-Gly) (interchain with G-Cter in SUMO2) cross-link involves residue K882. 2 disordered regions span residues 905 to 925 and 1004 to 1034; these read RASG…SDRG and DGTD…GTLV. Polar residues predominate over residues 906-920; the sequence is ASGQKDQGHSPQTSF. S915 bears the Phosphoserine mark. The span at 1018–1034 shows a compositional bias: basic and acidic residues; that stretch reads SEQRLFWHEDSKPGTLV. A Glycyl lysine isopeptide (Lys-Gly) (interchain with G-Cter in SUMO2) cross-link involves residue K1029.

As to quaternary structure, interacts with CYTH3. Interacts with PARD3. Interacts with CYTH1.

It is found in the cytoplasm. The protein resides in the cytoskeleton. Its subcellular location is the cell junction. The protein localises to the tight junction. It localises to the adherens junction. Functionally, member of GRP1 signaling complexes that are acutely recruited to plasma membrane ruffles in response to insulin receptor signaling. May function as a scaffolding protein that regulates epithelial cell polarity by connecting ARF6 activation with the PAR3 complex. Plays a redundant role with FRMD4A in epithelial polarization. The sequence is that of FERM domain-containing protein 4B from Homo sapiens (Human).